A 213-amino-acid chain; its full sequence is Imidazole glycerol phosphate synthase subunit HisH (213 aa).

The Glutamine amidotransferase type-1 domain maps to methionine 3–glycine 213. Cysteine 81 serves as the catalytic Nucleophile. Active-site residues include histidine 188 and glutamate 190.

As to quaternary structure, heterodimer of HisH and HisF.

The protein resides in the cytoplasm. The enzyme catalyses 5-[(5-phospho-1-deoxy-D-ribulos-1-ylimino)methylamino]-1-(5-phospho-beta-D-ribosyl)imidazole-4-carboxamide + L-glutamine = D-erythro-1-(imidazol-4-yl)glycerol 3-phosphate + 5-amino-1-(5-phospho-beta-D-ribosyl)imidazole-4-carboxamide + L-glutamate + H(+). The catalysed reaction is L-glutamine + H2O = L-glutamate + NH4(+). The protein operates within amino-acid biosynthesis; L-histidine biosynthesis; L-histidine from 5-phospho-alpha-D-ribose 1-diphosphate: step 5/9. Functionally, IGPS catalyzes the conversion of PRFAR and glutamine to IGP, AICAR and glutamate. The HisH subunit catalyzes the hydrolysis of glutamine to glutamate and ammonia as part of the synthesis of IGP and AICAR. The resulting ammonia molecule is channeled to the active site of HisF. The protein is Imidazole glycerol phosphate synthase subunit HisH of Geobacillus thermodenitrificans (strain NG80-2).